The following is a 340-amino-acid chain: Ketol-acid reductoisomerase (NADP(+)) (340 aa).

The KARI N-terminal Rossmann domain maps to 1–183; sequence MAITVYYDKD…GGGRTGIIET (183 aa). Residues 26-29, S54, and 84-87 each bind NADP(+); these read FGSQ and DEFQ. H109 is an active-site residue. G135 is a binding site for NADP(+). The 146-residue stretch at 184 to 329 folds into the KARI C-terminal knotted domain; the sequence is TFKAETETDL…EKLRGMMPWI (146 aa). Mg(2+) is bound by residues D192, E196, E228, and E232. Substrate is bound at residue S253.

The protein belongs to the ketol-acid reductoisomerase family. The cofactor is Mg(2+).

It catalyses the reaction (2R)-2,3-dihydroxy-3-methylbutanoate + NADP(+) = (2S)-2-acetolactate + NADPH + H(+). The enzyme catalyses (2R,3R)-2,3-dihydroxy-3-methylpentanoate + NADP(+) = (S)-2-ethyl-2-hydroxy-3-oxobutanoate + NADPH + H(+). Its pathway is amino-acid biosynthesis; L-isoleucine biosynthesis; L-isoleucine from 2-oxobutanoate: step 2/4. It participates in amino-acid biosynthesis; L-valine biosynthesis; L-valine from pyruvate: step 2/4. Its function is as follows. Involved in the biosynthesis of branched-chain amino acids (BCAA). Catalyzes an alkyl-migration followed by a ketol-acid reduction of (S)-2-acetolactate (S2AL) to yield (R)-2,3-dihydroxy-isovalerate. In the isomerase reaction, S2AL is rearranged via a Mg-dependent methyl migration to produce 3-hydroxy-3-methyl-2-ketobutyrate (HMKB). In the reductase reaction, this 2-ketoacid undergoes a metal-dependent reduction by NADPH to yield (R)-2,3-dihydroxy-isovalerate. This is Ketol-acid reductoisomerase (NADP(+)) from Campylobacter fetus subsp. fetus (strain 82-40).